Reading from the N-terminus, the 218-residue chain is Ras-related protein RABA1h (218 aa).

A GTP-binding site is contributed by Gly-20–Ser-27. The Effector region motif lies at Ser-42–Phe-50. Residues Asp-68–Gln-72, Asn-126–Asp-129, and Ser-156–Ala-157 each bind GTP. S-geranylgeranyl cysteine attachment occurs at residues Cys-215 and Cys-216.

Belongs to the small GTPase superfamily. Rab family.

The protein resides in the cell membrane. In terms of biological role, intracellular vesicle trafficking and protein transport. The sequence is that of Ras-related protein RABA1h (RABA1H) from Arabidopsis thaliana (Mouse-ear cress).